The following is a 103-amino-acid chain: Trp operon repressor homolog (103 aa).

Residues 59 to 82 (QRQISQMLGVGIATITRGSNELKS) mediate DNA binding.

The protein belongs to the TrpR family. As to quaternary structure, homodimer.

The protein resides in the cytoplasm. Functionally, this protein is an aporepressor. When complexed with L-tryptophan it binds the operator region of the trp operon and prevents the initiation of transcription. This Vibrio parahaemolyticus serotype O3:K6 (strain RIMD 2210633) protein is Trp operon repressor homolog.